A 980-amino-acid polypeptide reads, in one-letter code: Probable outer membrane protein PmpH (980 aa).

An N-terminal signal peptide occupies residues 1–24 (MPFSLRSTSFCFLACLCSYSYGLA). The 320-residue stretch at 661–980 (GELVPNSLWV…FVSLGLNRIF (320 aa)) folds into the Autotransporter domain.

It belongs to the PMP outer membrane protein family.

The protein resides in the secreted. The protein localises to the cell wall. It is found in the cell outer membrane. This is Probable outer membrane protein PmpH (pmpH) from Chlamydia muridarum (strain MoPn / Nigg).